The primary structure comprises 84 residues: Small ribosomal subunit protein bS18 (84 aa).

The protein belongs to the bacterial ribosomal protein bS18 family. Part of the 30S ribosomal subunit. Forms a tight heterodimer with protein bS6.

Functionally, binds as a heterodimer with protein bS6 to the central domain of the 16S rRNA, where it helps stabilize the platform of the 30S subunit. The chain is Small ribosomal subunit protein bS18 from Dictyoglomus turgidum (strain DSM 6724 / Z-1310).